We begin with the raw amino-acid sequence, 275 residues long: 2,3,4,5-tetrahydropyridine-2,6-dicarboxylate N-succinyltransferase (275 aa).

Arg-104 and Asp-141 together coordinate substrate.

Belongs to the transferase hexapeptide repeat family. As to quaternary structure, homotrimer.

The protein resides in the cytoplasm. The catalysed reaction is (S)-2,3,4,5-tetrahydrodipicolinate + succinyl-CoA + H2O = (S)-2-succinylamino-6-oxoheptanedioate + CoA. The protein operates within amino-acid biosynthesis; L-lysine biosynthesis via DAP pathway; LL-2,6-diaminopimelate from (S)-tetrahydrodipicolinate (succinylase route): step 1/3. This chain is 2,3,4,5-tetrahydropyridine-2,6-dicarboxylate N-succinyltransferase, found in Haemophilus influenzae (strain PittEE).